Consider the following 1500-residue polypeptide: Rho GTPase-activating protein 35 (1500 aa).

The tract at residues 1 to 266 (MMMARKQDVR…IPYFEALKQQ (266 aa)) is has GTPase activity, required for proper localization. Residues K28, 33–37 (IGKSC), L52, S56, 95–97 (EQT), 201–203 (KCD), and 229–231 (SAR) contribute to the GTP site. FF domains are found at residues 270–327 (IATA…HIHR), 368–422 (KLLE…HLEK), 429–483 (RAEM…HQKQ), and 485–550 (IDKA…HIHF). Y308 bears the Phosphotyrosine mark. At S589 the chain carries Phosphoserine. The region spanning 592 to 767 (DPNIDRINLV…LLDSKRNLNL (176 aa)) is the pG1 pseudoGTPase domain. A phosphoserine mark is found at S770 and S773. Residues 783 to 947 (RIVMCLMCGD…FKDVVDKKNI (165 aa)) form the pG2 pseudoGTPase domain. Phosphoserine occurs at positions 970, 975, 985, 1002, and 1073. A disordered region spans residues 970-989 (SPRAGSPLCNSNLQDSEEDI). Positions 1058-1090 (SYLDQGHRDGQRKSVSSSTWLPPDGFDPSDYAE) are disordered. A Phosphotyrosine modification is found at Y1088. Y1106 is subject to Phosphotyrosine; by ABL2 and PTK6. Over residues 1125 to 1142 (KAQSNGSGNGSDSEMDTS) the composition is skewed to polar residues. Residues 1125-1147 (KAQSNGSGNGSDSEMDTSSLERG) are disordered. Residues S1135, S1143, S1151, S1177, S1180, and S1222 each carry the phosphoserine modification. The interval 1178–1208 (VGSDDELGPIRKKEEDQASQGYKGDNAVIPY) is disordered. Positions 1214–1237 (PRRRNILRSLRRNTKKPKPKPRPS) are required for phospholipid binding and regulation of the substrate preference. T1227 bears the Phosphothreonine mark. S1237 is subject to Phosphoserine. Positions 1250–1437 (VPLTTVVTPE…LFIQQCPFFF (188 aa)) constitute a Rho-GAP domain. The disordered stretch occupies residues 1444-1500 (EPPGATPSSPSAVASTVPFLTSTPVTSQPSPPQSPPPTPQSPMQALLPSQLQAEHTL). Positions 1449 to 1471 (TPSSPSAVASTVPFLTSTPVTSQ) are enriched in low complexity. Residues 1472 to 1483 (PSPPQSPPPTPQ) are compositionally biased toward pro residues. 2 positions are modified to phosphoserine: S1473 and S1477. T1481 carries the phosphothreonine modification. Position 1484 is a phosphoserine (S1484). Polar residues predominate over residues 1490–1500 (LPSQLQAEHTL).

Interacts with RASA1. Interacts with the general transcription factor GTF2I, the interaction sequesters GTF2I in the cytoplasm. Post-translationally, phosphorylation of Tyr-1106 by PTK6 promotes the association with RASA1, inactivating RHOA while activating RAS. Phosphorylation at Tyr-308 by PDGFRA inhibits binding to GTF2I. Phosphorylated by PRKCA at Ser-1222 and Thr-1227, induces relocalization from the cytoplasm to regions of plasma membrane ruffling and prevents the binding and substrate specificity regulation by phospholipids. In brain, phosphorylated by FYN and SRC. During focal adhesion formation, phosphorylated by MAPK1 and MAPK3 at the C-terminal region, probably at Ser-1452, Ser-1477, Thr-1481 and Ser-1484. Phosphorylation by MAPK1 and MAPK3 inhibits GAP function and localizes ARGHAP35 away from newly forming focal adhesions and stress fibers in cells spreading on fibronectin. Phosphorylation at Ser-1477 and Thr-1481 by GSK3B requires priming by MAPK and inhibits RhoGAP activity and modulates polarized cell migration. As to expression, strongly expressed in retina (photoreceptor layer) and brain. Expression is maximal in the occipital, frontal, temporal lobe and also the cerebellum. Medium expression in the medulla and also in kidney, lung, liver, heart and spleen.

Its subcellular location is the cytoplasm. The protein resides in the cytoskeleton. It localises to the cilium basal body. It is found in the nucleus. The protein localises to the cell membrane. Its function is as follows. Rho GTPase-activating protein (GAP). Binds several acidic phospholipids which inhibits the Rho GAP activity to promote the Rac GAP activity. This binding is inhibited by phosphorylation by PRKCA. Involved in cell differentiation as well as cell adhesion and migration, plays an important role in retinal tissue morphogenesis, neural tube fusion, midline fusion of the cerebral hemispheres and mammary gland branching morphogenesis. Transduces signals from p21-ras to the nucleus, acting via the ras GTPase-activating protein (GAP). Transduces SRC-dependent signals from cell-surface adhesion molecules, such as laminin, to promote neurite outgrowth. Regulates axon outgrowth, guidance and fasciculation. Modulates Rho GTPase-dependent F-actin polymerization, organization and assembly, is involved in polarized cell migration and in the positive regulation of ciliogenesis and cilia elongation. During mammary gland development, is required in both the epithelial and stromal compartments for ductal outgrowth. Represses transcription of the glucocorticoid receptor by binding to the cis-acting regulatory sequence 5'-GAGAAAAGAAACTGGAGAAACTC-3'; this function is however unclear and would need additional experimental evidences. The chain is Rho GTPase-activating protein 35 from Canis lupus familiaris (Dog).